The chain runs to 122 residues: Large ribosomal subunit protein uL14 (122 aa).

This sequence belongs to the universal ribosomal protein uL14 family. Part of the 50S ribosomal subunit. Forms a cluster with proteins L3 and L19. In the 70S ribosome, L14 and L19 interact and together make contacts with the 16S rRNA in bridges B5 and B8.

Functionally, binds to 23S rRNA. Forms part of two intersubunit bridges in the 70S ribosome. This chain is Large ribosomal subunit protein uL14, found in Helicobacter hepaticus (strain ATCC 51449 / 3B1).